A 280-amino-acid chain; its full sequence is 4-deoxy-L-threo-5-hexosulose-uronate ketol-isomerase (280 aa).

Positions 198, 200, 205, and 247 each coordinate Zn(2+).

This sequence belongs to the KduI family. It depends on Zn(2+) as a cofactor.

The catalysed reaction is 5-dehydro-4-deoxy-D-glucuronate = 3-deoxy-D-glycero-2,5-hexodiulosonate. It participates in glycan metabolism; pectin degradation; 2-dehydro-3-deoxy-D-gluconate from pectin: step 4/5. Functionally, catalyzes the isomerization of 5-dehydro-4-deoxy-D-glucuronate to 3-deoxy-D-glycero-2,5-hexodiulosonate. This chain is 4-deoxy-L-threo-5-hexosulose-uronate ketol-isomerase, found in Bacteroides fragilis (strain ATCC 25285 / DSM 2151 / CCUG 4856 / JCM 11019 / LMG 10263 / NCTC 9343 / Onslow / VPI 2553 / EN-2).